The chain runs to 555 residues: Embryonic protein DC-8 (555 aa).

Residues 83–115 are compositionally biased toward basic and acidic residues; the sequence is RENTDYAYDKGREGGDVAAQKAEEAKEKAKMAK. Disordered regions lie at residues 83–118 and 132–151; these read RENT…KDTT and KAEE…KEKA. 17 repeat units span residues 97 to 114, 115 to 125, 126 to 140, 141 to 154, 155 to 176, 177 to 191, 192 to 205, 206 to 216, 217 to 237, 238 to 259, 260 to 281, 282 to 303, 304 to 325, 326 to 343, 344 to 358, 359 to 376, and 377 to 391. A 17 X approximate tandem repeats region spans residues 97–391; sequence GDVAAQKAEE…DTTVGKMTEL (295 aa). The interval 184-204 is disordered; that stretch reads AAEAKDTTAQKAAEAKEKTGE. A compositionally biased stretch (basic and acidic residues) spans 444–465; sequence LQEEGVKDEAKQRAEADRETAG. The segment at 444–472 is disordered; sequence LQEEGVKDEAKQRAEADRETAGDRGSAAK.

This sequence belongs to the LEA type 4 family.

Its subcellular location is the cytoplasm. It is found in the secreted. The protein resides in the cell wall. In terms of biological role, may play a role in late embryogeny. The protein is Embryonic protein DC-8 of Daucus carota (Wild carrot).